A 246-amino-acid polypeptide reads, in one-letter code: Uridylate kinase (246 aa).

Residue 20–23 participates in ATP binding; the sequence is KISG. The involved in allosteric activation by GTP stretch occupies residues 28 to 33; that stretch reads GDQGYG. Glycine 62 is a UMP binding site. ATP-binding residues include glycine 63 and arginine 67. UMP-binding positions include aspartate 82 and 143 to 150; that span reads TGNPYFTT. ATP-binding residues include threonine 170, tyrosine 176, and aspartate 179.

This sequence belongs to the UMP kinase family. Homohexamer.

The protein resides in the cytoplasm. It catalyses the reaction UMP + ATP = UDP + ADP. It participates in pyrimidine metabolism; CTP biosynthesis via de novo pathway; UDP from UMP (UMPK route): step 1/1. Its activity is regulated as follows. Allosterically activated by GTP. Inhibited by UTP. Its function is as follows. Catalyzes the reversible phosphorylation of UMP to UDP. This chain is Uridylate kinase, found in Cereibacter sphaeroides (strain ATCC 17023 / DSM 158 / JCM 6121 / CCUG 31486 / LMG 2827 / NBRC 12203 / NCIMB 8253 / ATH 2.4.1.) (Rhodobacter sphaeroides).